The sequence spans 209 residues: uncharacterized protein (209 aa).

This is an uncharacterized protein from Orgyia pseudotsugata (Douglas-fir tussock moth).